The primary structure comprises 500 residues: MEAARPPTTAGKFVVVGGGIAGVTCAEQLATHFPSEDILLVTASPVIKAVTNFKQISKILEEFDVEEQSSTMLEKRFPNIKVIESGVKQLKSEEHCIVTEDGNQHVYKKLCLCAGAKPKLICEGNPYVLGIRDTDSAQEFQKQLIKAKRIMIIGNGGIALELVYEIEGCEVIWAIKDKAIGNTFFDAGAAEFLTSKLIAEKSEAKIAHKRTRYTTEGRKKEARSKCKSDNVGSALGPDWHEGLNLKGTKEFSHKIHLETMCEVKKIYLQDEFRILKKKSFSFPRDHKSVTTDTEMWPVYVELTNEKIYGCDFIVSATGVTPNVEPFLHGNSFELGEDGGLKVDDHMHTSLPDVYAAGDICTTAWQLSPVWQQMRLWTQARQMGWYAAKCMAAASSGDSIDMDFSFELFAHVTKFFNYKVVLLGKYNAQGLGSDHELMLRCTKGQEYVKVVMQNGRMMGAVLIGETDLEETFENLILNQMNLSSYGEDLLDPNIDIEDYFD.

Met-1 bears the N-acetylmethionine mark.

This sequence belongs to the class-I pyridine nucleotide-disulfide oxidoreductase family. PYROXD1 subfamily. FAD is required as a cofactor.

It is found in the nucleus. It localises to the cytoplasm. The protein localises to the myofibril. The protein resides in the sarcomere. Its function is as follows. Probable FAD-dependent oxidoreductase; involved in the cellular oxidative stress response. Required for normal sarcomere structure and muscle fiber integrity. The polypeptide is Pyridine nucleotide-disulfide oxidoreductase domain-containing protein 1 (PYROXD1) (Pongo abelii (Sumatran orangutan)).